The chain runs to 411 residues: Serine hydroxymethyltransferase (411 aa).

(6S)-5,6,7,8-tetrahydrofolate contacts are provided by residues Leu119 and 123–125 (GHL). Lys228 carries the post-translational modification N6-(pyridoxal phosphate)lysine. 351–353 (SPF) contacts (6S)-5,6,7,8-tetrahydrofolate.

The protein belongs to the SHMT family. As to quaternary structure, homodimer. It depends on pyridoxal 5'-phosphate as a cofactor.

The protein resides in the cytoplasm. It catalyses the reaction (6R)-5,10-methylene-5,6,7,8-tetrahydrofolate + glycine + H2O = (6S)-5,6,7,8-tetrahydrofolate + L-serine. It functions in the pathway one-carbon metabolism; tetrahydrofolate interconversion. It participates in amino-acid biosynthesis; glycine biosynthesis; glycine from L-serine: step 1/1. Its function is as follows. Catalyzes the reversible interconversion of serine and glycine with tetrahydrofolate (THF) serving as the one-carbon carrier. This reaction serves as the major source of one-carbon groups required for the biosynthesis of purines, thymidylate, methionine, and other important biomolecules. Also exhibits THF-independent aldolase activity toward beta-hydroxyamino acids, producing glycine and aldehydes, via a retro-aldol mechanism. This chain is Serine hydroxymethyltransferase, found in Clostridium beijerinckii (strain ATCC 51743 / NCIMB 8052) (Clostridium acetobutylicum).